The sequence spans 289 residues: Ribosomal RNA small subunit methyltransferase A (289 aa).

S-adenosyl-L-methionine contacts are provided by Asn-21, Leu-23, Gly-48, Glu-69, Asp-94, and Asn-120.

It belongs to the class I-like SAM-binding methyltransferase superfamily. rRNA adenine N(6)-methyltransferase family. RsmA subfamily.

It is found in the cytoplasm. The catalysed reaction is adenosine(1518)/adenosine(1519) in 16S rRNA + 4 S-adenosyl-L-methionine = N(6)-dimethyladenosine(1518)/N(6)-dimethyladenosine(1519) in 16S rRNA + 4 S-adenosyl-L-homocysteine + 4 H(+). Functionally, specifically dimethylates two adjacent adenosines (A1518 and A1519) in the loop of a conserved hairpin near the 3'-end of 16S rRNA in the 30S particle. May play a critical role in biogenesis of 30S subunits. The polypeptide is Ribosomal RNA small subunit methyltransferase A (Actinobacillus pleuropneumoniae serotype 5b (strain L20)).